The following is a 429-amino-acid chain: 3-phosphoshikimate 1-carboxyvinyltransferase (429 aa).

Positions 22, 23, and 27 each coordinate 3-phosphoshikimate. Lys-22 serves as a coordination point for phosphoenolpyruvate. Phosphoenolpyruvate-binding residues include Gly-94 and Arg-122. 4 residues coordinate 3-phosphoshikimate: Ser-167, Gln-169, Asp-315, and Lys-342. Position 169 (Gln-169) interacts with phosphoenolpyruvate. Residue Asp-315 is the Proton acceptor of the active site. Residues Arg-346 and Arg-388 each contribute to the phosphoenolpyruvate site.

Belongs to the EPSP synthase family. As to quaternary structure, monomer.

The protein resides in the cytoplasm. The enzyme catalyses 3-phosphoshikimate + phosphoenolpyruvate = 5-O-(1-carboxyvinyl)-3-phosphoshikimate + phosphate. It participates in metabolic intermediate biosynthesis; chorismate biosynthesis; chorismate from D-erythrose 4-phosphate and phosphoenolpyruvate: step 6/7. Its function is as follows. Catalyzes the transfer of the enolpyruvyl moiety of phosphoenolpyruvate (PEP) to the 5-hydroxyl of shikimate-3-phosphate (S3P) to produce enolpyruvyl shikimate-3-phosphate and inorganic phosphate. This Geobacter metallireducens (strain ATCC 53774 / DSM 7210 / GS-15) protein is 3-phosphoshikimate 1-carboxyvinyltransferase.